We begin with the raw amino-acid sequence, 188 residues long: GMP synthase [glutamine-hydrolyzing] subunit A (188 aa).

Residues 1–188 (MIVIMDNGGQ…RNFAELCGEL (188 aa)) form the Glutamine amidotransferase type-1 domain. Cys-78 serves as the catalytic Nucleophile. Residues His-165 and Glu-167 contribute to the active site.

In terms of assembly, heterodimer composed of a glutamine amidotransferase subunit (A) and a GMP-binding subunit (B).

It catalyses the reaction XMP + L-glutamine + ATP + H2O = GMP + L-glutamate + AMP + diphosphate + 2 H(+). Its pathway is purine metabolism; GMP biosynthesis; GMP from XMP (L-Gln route): step 1/1. Functionally, catalyzes the synthesis of GMP from XMP. This chain is GMP synthase [glutamine-hydrolyzing] subunit A, found in Thermococcus kodakarensis (strain ATCC BAA-918 / JCM 12380 / KOD1) (Pyrococcus kodakaraensis (strain KOD1)).